Consider the following 256-residue polypeptide: Probable S-methyl-5'-thioinosine phosphorylase (256 aa).

Phosphate-binding positions include Thr-10 and 47–48 (RH). Position 178 (Met-178) interacts with substrate. Thr-179 provides a ligand contact to phosphate. 202 to 204 (NYA) serves as a coordination point for substrate.

Belongs to the PNP/MTAP phosphorylase family. MTAP subfamily. Homotrimer.

The catalysed reaction is S-methyl-5'-thioinosine + phosphate = 5-(methylsulfanyl)-alpha-D-ribose 1-phosphate + hypoxanthine. It participates in purine metabolism; purine nucleoside salvage. Catalyzes the reversible phosphorylation of S-methyl-5'-thioinosine (MTI) to hypoxanthine and 5-methylthioribose-1-phosphate. Involved in the breakdown of S-methyl-5'-thioadenosine (MTA), a major by-product of polyamine biosynthesis. Catabolism of (MTA) occurs via deamination to MTI and phosphorolysis to hypoxanthine. This Methanopyrus kandleri (strain AV19 / DSM 6324 / JCM 9639 / NBRC 100938) protein is Probable S-methyl-5'-thioinosine phosphorylase.